Reading from the N-terminus, the 506-residue chain is D-alanine--D-alanyl carrier protein ligase (506 aa).

Position 152 to 153 (152 to 153 (TS)) interacts with ATP. Residue D197 participates in D-alanine binding. 292–297 (NTYGPT) is an ATP binding site. V301 is a D-alanine binding site. Residues D383, 395–398 (YRGR), and K494 contribute to the ATP site. Position 494 (K494) interacts with D-alanine.

It belongs to the ATP-dependent AMP-binding enzyme family. DltA subfamily.

The protein localises to the cytoplasm. The enzyme catalyses holo-[D-alanyl-carrier protein] + D-alanine + ATP = D-alanyl-[D-alanyl-carrier protein] + AMP + diphosphate. Its pathway is cell wall biogenesis; lipoteichoic acid biosynthesis. Functionally, catalyzes the first step in the D-alanylation of lipoteichoic acid (LTA), the activation of D-alanine and its transfer onto the D-alanyl carrier protein (Dcp) DltC. In an ATP-dependent two-step reaction, forms a high energy D-alanyl-AMP intermediate, followed by transfer of the D-alanyl residue as a thiol ester to the phosphopantheinyl prosthetic group of the Dcp. D-alanylation of LTA plays an important role in modulating the properties of the cell wall in Gram-positive bacteria, influencing the net charge of the cell wall. The polypeptide is D-alanine--D-alanyl carrier protein ligase (Lacticaseibacillus casei (strain BL23) (Lactobacillus casei)).